A 1403-amino-acid chain; its full sequence is Eukaryotic translation initiation factor 4 gamma (1403 aa).

Polar residues-rich tracts occupy residues 1–11 (MSSKPPSNTPK), 19–39 (ASSQ…TATA), and 50–60 (EPTNTSRANAQ). 4 disordered regions span residues 1 to 381 (MSSK…GSTP), 439 to 464 (SRSG…RNGF), 488 to 774 (VVVP…KRDL), and 861 to 1003 (AFSD…EALL). Residue Ser83 is modified to Phosphoserine. Residues 109-137 (DNTSKPSANSSAERTSSQHQKPETSSQIG) are compositionally biased toward polar residues. Composition is skewed to low complexity over residues 190–208 (SGVS…SVTS) and 231–248 (PRPT…ANGA). The segment covering 249-269 (PTNKPSTDINTTDPATQTTQV) has biased composition (polar residues). The segment covering 270–291 (SASNSPALSGSSTPSNTSSRSN) has biased composition (low complexity). The segment covering 298–308 (FSEKRHYDRYG) has biased composition (basic and acidic residues). The segment covering 325 to 334 (NYNNSGNNRN) has biased composition (low complexity). Polar residues-rich tracts occupy residues 346–381 (RNYN…GSTP), 439–460 (SRSG…TLSP), and 493–508 (KNAS…SRAE). A phosphoserine mark is found at Ser452, Ser455, Ser456, and Ser459. Residues 537–714 (IQEKAEAEAK…GKREADKNPE (178 aa)) are compositionally biased toward basic and acidic residues. Over residues 720–737 (PLASSEANVDTSKQTNAT) the composition is skewed to polar residues. A compositionally biased stretch (basic and acidic residues) spans 741 to 754 (VVDKTKVEKLKASE). Residues 757-768 (STSSLSSPSHST) show a composition bias toward low complexity. Phosphoserine occurs at positions 866 and 882. A compositionally biased stretch (low complexity) spans 868–886 (RGMYSSSRQSSRSGSNTHS). Thr884 carries the phosphothreonine modification. Residues Ser886, Ser911, Ser919, and Ser921 each carry the phosphoserine modification. Tyr923 is subject to Phosphotyrosine. A compositionally biased stretch (basic and acidic residues) spans 986-995 (KLTEKPAETK). Positions 1009 to 1245 (QRKVKGSLNK…MDVMDSRKNG (237 aa)) constitute an MIF4G domain. The disordered stretch occupies residues 1266–1403 (AERKKALAES…QKDSNSKTSS (138 aa)). A compositionally biased stretch (basic and acidic residues) spans 1284-1295 (HGRDMNRGDSRM). Composition is skewed to polar residues over residues 1302–1313 (PPFSSSDWSNNK), 1328–1341 (SGTQ…SLSS), and 1348–1358 (VSRTPSRQNSA). At Ser1333 the chain carries Phosphoserine. The segment covering 1383–1403 (LEEHDHDNDGGQKDSNSKTSS) has biased composition (basic and acidic residues).

It belongs to the eukaryotic initiation factor 4G family.

Its subcellular location is the cytoplasm. The protein localises to the perinuclear region. In terms of biological role, component of the protein complex eIF4F, which is involved in the recognition of the mRNA cap, ATP-dependent unwinding of 5'-terminal secondary structure and recruitment of mRNA to the ribosome. The protein is Eukaryotic translation initiation factor 4 gamma (tif471) of Schizosaccharomyces pombe (strain 972 / ATCC 24843) (Fission yeast).